The sequence spans 188 residues: Murein DD-endopeptidase MepS/Murein LD-carboxypeptidase (188 aa).

Positions 1–26 (MVKSQPILRYILRGIPAIAVAVLLSA) are cleaved as a signal peptide. Residue cysteine 27 is the site of N-palmitoyl cysteine attachment. Cysteine 27 carries the S-diacylglycerol cysteine lipid modification. The NlpC/P60 domain occupies 64–185 (VDVKSRIMDQ…KRYNEARRVL (122 aa)). Cysteine 94 acts as the Nucleophile in catalysis. Histidine 145 acts as the Proton acceptor in catalysis. The active site involves histidine 157.

The protein belongs to the peptidase C40 family. Monomer.

The protein resides in the cell outer membrane. The catalysed reaction is N-acetyl-D-glucosaminyl-N-acetylmuramoyl-L-alanyl-meso-2,6-diaminoheptanedioyl-D-alanine + H2O = N-acetyl-D-glucosaminyl-N-acetylmuramoyl-L-alanyl-meso-2,6-diaminoheptanedioate + D-alanine. The protein operates within cell wall biogenesis; cell wall polysaccharide biosynthesis. A murein DD-endopeptidase with specificity for D-Ala-meso-diaminopimelic acid (mDAP) cross-links. Its role is probably to cleave D-Ala-mDAP cross-links to allow insertion of new glycans and thus cell wall expansion. Functionally redundant with MepM and MepH. Also has weak LD-carboxypeptidase activity on L-mDAP-D-Ala peptide bonds. This Escherichia coli O157:H7 protein is Murein DD-endopeptidase MepS/Murein LD-carboxypeptidase (mepS).